Here is a 496-residue protein sequence, read N- to C-terminus: FAD-linked oxidoreductase AFUA_1G00980 (496 aa).

Positions 1-21 are cleaved as a signal peptide; that stretch reads MRRATLIPLAIWVAGAAAAAA. Asn49, Asn122, Asn205, Asn258, Asn344, Asn351, Asn371, and Asn382 each carry an N-linked (GlcNAc...) asparagine glycan. The 180-residue stretch at 64-243 folds into the FAD-binding PCMH-type domain; sequence MAPTYAVSVR…VEAVYQVTDL (180 aa).

This sequence belongs to the oxygen-dependent FAD-linked oxidoreductase family. FAD serves as cofactor.

In terms of biological role, FAD-linked oxidoreductase; part of the gene cluster that mediates the biosynthesis of fumigermin that inhibits germination of spores of the inducing S.rapamycinicus, and thus helps the fungus to defend resources in the shared habitat against a bacterial competitor. The partially reducing polyketide synthase fngA alone is sufficient for the production of fumigermin. FgnA catalyzes the condensation of 3 malonyl-CoA units to an acetyl-CoA starter, and 3 methylations to yield fumigermin. It is remarkable that the five cluster genes including fgnA are conserved in distantly related fungi, supporting the assumption of a fumigermin cluster; it is thus possible that originally all five genes were functional, but that the genes encoding tailoring enzymes became inactive from mutations, similar to the case of the fgnA gene in strains A1163 and Af293. In Aspergillus fumigatus (strain ATCC MYA-4609 / CBS 101355 / FGSC A1100 / Af293) (Neosartorya fumigata), this protein is FAD-linked oxidoreductase AFUA_1G00980.